A 346-amino-acid chain; its full sequence is Guanine nucleotide-binding protein subunit beta-2 (346 aa).

WD repeat units lie at residues 57 to 96 (GHINKVNSVHFAGDSRHCVTGSLDGKLIIWDTWTANKVQI), 99 to 138 (LRSAWVMTVAFSPSGNFVACGGMDNQCTVYDVNNRDASGV), 147 to 185 (GYEGFLSSCRFLDDGHLITGSGDMKICHWDLEKGVKTMD), 188 to 227 (GHAGDIAGLSLSPDMKTYITGSVDKTAKLWDVREEGHKQM), 230 to 269 (GHDMDVSSVCYHPSGFGFASCSEDQTARMYDLRADQQIAQ), 274 to 313 (QKNTGFTSCALSTSGRYLMCGGIEGNVHSWDTMKQRHTGT), and 316 to 346 (GHENRITCISLCPNGMCLASTSWDQQVRLWL).

It belongs to the WD repeat G protein beta family. G proteins are composed of 3 units, alpha, beta and gamma. Interacts with Ggamma30A/Guanine nucleotide-binding protein subunit gamma-e. In terms of tissue distribution, expressed exclusively in photoreceptor cells in the compound eye (at protein level).

It localises to the cytoplasm. The protein localises to the cell projection. Its subcellular location is the axon. The protein resides in the rhabdomere. In terms of biological role, guanine nucleotide-binding proteins (G proteins) are involved as a modulator or transducer in various transmembrane signaling systems. The beta and gamma chains are required for the GTPase activity, for replacement of GDP by GTP, and for G protein-effector interaction. This chain is Guanine nucleotide-binding protein subunit beta-2 (Gbeta76C), found in Drosophila melanogaster (Fruit fly).